Reading from the N-terminus, the 287-residue chain is rRNA adenine N-6-methyltransferase (287 aa).

Residues 1-13 (MKKKNHKYRGKKL) are compositionally biased toward basic residues. A disordered region spans residues 1-21 (MKKKNHKYRGKKLNRGESPNF). Positions 25, 27, 52, 73, 98, and 114 each coordinate S-adenosyl-L-methionine.

Belongs to the class I-like SAM-binding methyltransferase superfamily. rRNA adenine N(6)-methyltransferase family.

Its function is as follows. Involved in erythromycin resistance. This Bacillus licheniformis protein is rRNA adenine N-6-methyltransferase (ermD).